The chain runs to 229 residues: MAEDFGFFSSSESGAPEAAEEDPAAAFLAQQESEIAGIENDPGFGAPAASQVASAQPGLASGAGSEDMSTTVNGDVFQEANGPADGYAAIAQADRLTQEPESIRKWREEQKKRLQELDAASKVTEQEWREKAKKDLEEWNQRQSEQVEKNKINNRIADKAFYQQPDADTIGYVASEEAFVKESKEETPGTEWEKVAQLCDFNPKSSKQCKDVSRLRSVLMSLKQTPLSR.

Low complexity-rich tracts occupy residues 1-17 and 45-58; these read MAED…GAPE and GAPA…AQPG. A disordered region spans residues 1–70; that stretch reads MAEDFGFFSS…SGAGSEDMST (70 aa). S11 and S13 each carry phosphoserine. Residues 93–155 are involved in binding clathrin heavy chain; it reads ADRLTQEPES…QVEKNKINNR (63 aa). T187 bears the Phosphothreonine mark. An intrachain disulfide couples C199 to C209. K204 bears the N6-acetyllysine mark. At S217 the chain carries Phosphoserine.

The protein belongs to the clathrin light chain family. Clathrin coats are formed from molecules containing 3 heavy chains and 3 light chains. Interacts (via N-terminus) with HIP1. Interacts with HIP1R.

It is found in the cytoplasmic vesicle membrane. The protein resides in the membrane. It localises to the coated pit. Its function is as follows. Clathrin is the major protein of the polyhedral coat of coated pits and vesicles. This is Clathrin light chain B (Cltb) from Mus musculus (Mouse).